Here is a 227-residue protein sequence, read N- to C-terminus: Germin-like protein subfamily 1 member 3 (227 aa).

The signal sequence occupies residues 1 to 24 (MKYPFQCFLAKIILLALASSFVSC). Cysteine 34 and cysteine 50 are oxidised to a cystine. The 149-residue stretch at 64-212 (SGLNIPGNTN…AFALDINIVR (149 aa)) folds into the Cupin type-1 domain. Positions 109, 111, and 116 each coordinate Mn(2+). An N-linked (GlcNAc...) asparagine glycan is attached at asparagine 136. A Mn(2+)-binding site is contributed by histidine 160.

This sequence belongs to the germin family. As to quaternary structure, oligomer (believed to be a pentamer but probably hexamer).

The protein resides in the secreted. It is found in the extracellular space. The protein localises to the apoplast. In terms of biological role, may play a role in plant defense. Probably has no oxalate oxidase activity even if the active site is conserved. The sequence is that of Germin-like protein subfamily 1 member 3 from Arabidopsis thaliana (Mouse-ear cress).